Consider the following 245-residue polypeptide: tRNA (guanine-N(1)-)-methyltransferase (245 aa).

S-adenosyl-L-methionine is bound by residues glycine 111 and 131–136; that span reads IGDYVL.

It belongs to the RNA methyltransferase TrmD family. Homodimer.

It is found in the cytoplasm. It carries out the reaction guanosine(37) in tRNA + S-adenosyl-L-methionine = N(1)-methylguanosine(37) in tRNA + S-adenosyl-L-homocysteine + H(+). In terms of biological role, specifically methylates guanosine-37 in various tRNAs. This Staphylococcus haemolyticus (strain JCSC1435) protein is tRNA (guanine-N(1)-)-methyltransferase.